A 166-amino-acid polypeptide reads, in one-letter code: MLVIHNRIEPQAEWAAELHLNFEARSKSRLRCFSAENEDVGLFLQRGQSPLRDGEFLQAEDGRIVRVCARPEKLMHVTCSSTFELTRAAYHLGNRHVALQVGDGWLRLLDDYVLKAMLDQLGATTEAIEAPFQPEHGAYGGGHHHSRAGEEDFNYPPRMHQFGVRK.

The interval 133 to 156 (QPEHGAYGGGHHHSRAGEEDFNYP) is disordered.

Belongs to the UreE family.

It is found in the cytoplasm. Involved in urease metallocenter assembly. Binds nickel. Probably functions as a nickel donor during metallocenter assembly. The chain is Urease accessory protein UreE 2 from Pseudomonas syringae pv. tomato (strain ATCC BAA-871 / DC3000).